The following is an 88-amino-acid chain: Mini zinc finger protein 3 (88 aa).

The ZF-HD dimerization-type; degenerate zinc-finger motif lies at 26–72 (YVECQKNHAANIGGYAVDGCREFMASGGDDALTCAACGCHRNFHRRE).

Homo- and heterodimers. Interacts with ZHD3, ZHD5, ZHD6, ZHD7, ZHD8, ZHD9, ZHD10 and ZHD13. In terms of tissue distribution, mostly expressed in roots, stems and flowers, present in seedlings and leaves, and weakly observed in inflorescence and siliques.

The protein resides in the cytoplasm. Inhibits zinc finger homeodomain (ZHD) transcription factors by interacting with them to prevent both their nuclear localization and their DNA-binding properties. Involved in integrating signals from multiple hormones by regulating the expression of specific genes. Promotes the formation of ectopic shoot meristems on leaf margins. This chain is Mini zinc finger protein 3 (MIF3), found in Arabidopsis thaliana (Mouse-ear cress).